Here is a 227-residue protein sequence, read N- to C-terminus: Translation initiation factor 6 (227 aa).

This sequence belongs to the eIF-6 family.

In terms of biological role, binds to the 50S ribosomal subunit and prevents its association with the 30S ribosomal subunit to form the 70S initiation complex. The polypeptide is Translation initiation factor 6 (Methanococcus aeolicus (strain ATCC BAA-1280 / DSM 17508 / OCM 812 / Nankai-3)).